Reading from the N-terminus, the 305-residue chain is Glycine--tRNA ligase alpha subunit (305 aa).

This sequence belongs to the class-II aminoacyl-tRNA synthetase family. As to quaternary structure, tetramer of two alpha and two beta subunits.

It localises to the cytoplasm. The enzyme catalyses tRNA(Gly) + glycine + ATP = glycyl-tRNA(Gly) + AMP + diphosphate. This is Glycine--tRNA ligase alpha subunit from Streptococcus thermophilus (strain CNRZ 1066).